We begin with the raw amino-acid sequence, 463 residues long: Quinolone resistance protein NorB (463 aa).

14 consecutive transmembrane segments (helical) span residues 17-37 (IGIVLSVITFWLFAQSLVNVV), 53-73 (IAVSITALFSGMFVVGAGGLA), 86-106 (IILNILGSLLIIISNIPLLLI), 107-127 (IGRLIQGLSAACIMPATLSII), 142-162 (YWSIGSWGGSGVCSFFGGAVA), 165-185 (LGWRWIFILSIIISLIALFLI), 201-221 (FDIKGLVLLVIMLLSLNILIT), 230-250 (SLLFITLLAIAIGSFSLFIVL), 273-293 (TASNFLLNGVAGTLIVANTFV), 299-319 (YSSLQAGSLSITYLVMVLIMI), 334-354 (PMLIGTGVLIVGECLISLTFL), 357-377 (IFYVICCIIGYLFFGLGLGIY), 403-423 (MASALGGAFGVALSGAVYAIV), and 435-455 (IALWLNAGMGILSFVIILLLV).

The protein belongs to the major facilitator superfamily. TCR/Tet family.

The protein localises to the cell membrane. Multidrug efflux pump that acts independently of NorA and is one of the factors that confers resistance against diverse quinolones and chemical compounds. The protein is Quinolone resistance protein NorB (norB) of Staphylococcus aureus (strain USA300).